A 644-amino-acid polypeptide reads, in one-letter code: SURP and G-patch domain-containing protein 1 (644 aa).

Positions 44–54 are enriched in basic and acidic residues; sequence REIEARMEQKA. Disordered regions lie at residues 44-74 and 98-122; these read REIEARMEQKARQSHVASPQPPHPGEVADAQ and AQASTDSAPRAPPSSPAPSSLKRPL. T128 is modified (phosphothreonine). Residues 188 to 230 form an SURP motif 1 repeat; that stretch reads VIEKLARFVAEGGPELEKVAMEDYKDNPAFTFLHDKNSREFLY. Residue S253 is modified to Phosphoserine. An SURP motif 2 repeat occupies 263–306; the sequence is LAEKLARFIADGGPEVETIALQNNRENQAFSFLYDPNSQGYRYY. Disordered regions lie at residues 316–342 and 360–412; these read AKAGSTGSLPAPVPNPSLRRKSAPEAL and PAVN…PSPL. The residue at position 323 (S323) is a Phosphoserine. Positions 360-369 are enriched in pro residues; sequence PAVNPTPSIP. The Nuclear localization signal motif lies at 379–385; the sequence is KRKRKSR. Phosphoserine occurs at positions 408, 410, 413, and 484. The 48-residue stretch at 561–608 folds into the G-patch domain; it reads VENIGYQMLMKMGWKEGEGLGTEGQGIKNPVNKGATTIDGAGFGIDRP.

As to quaternary structure, component of the spliceosome.

The protein localises to the nucleus. Its function is as follows. Plays a role in pre-mRNA splicing. This Rattus norvegicus (Rat) protein is SURP and G-patch domain-containing protein 1 (Sugp1).